Here is a 200-residue protein sequence, read N- to C-terminus: Probable nicotinate-nucleotide adenylyltransferase (200 aa).

It belongs to the NadD family.

The enzyme catalyses nicotinate beta-D-ribonucleotide + ATP + H(+) = deamido-NAD(+) + diphosphate. It functions in the pathway cofactor biosynthesis; NAD(+) biosynthesis; deamido-NAD(+) from nicotinate D-ribonucleotide: step 1/1. Functionally, catalyzes the reversible adenylation of nicotinate mononucleotide (NaMN) to nicotinic acid adenine dinucleotide (NaAD). This is Probable nicotinate-nucleotide adenylyltransferase from Lachnoclostridium phytofermentans (strain ATCC 700394 / DSM 18823 / ISDg) (Clostridium phytofermentans).